Here is a 266-residue protein sequence, read N- to C-terminus: 5'-nucleotidase SurE (266 aa).

The a divalent metal cation site is built by aspartate 8, aspartate 9, serine 39, and asparagine 95.

This sequence belongs to the SurE nucleotidase family. It depends on a divalent metal cation as a cofactor.

The protein resides in the cytoplasm. The enzyme catalyses a ribonucleoside 5'-phosphate + H2O = a ribonucleoside + phosphate. Functionally, nucleotidase that shows phosphatase activity on nucleoside 5'-monophosphates. The sequence is that of 5'-nucleotidase SurE from Syntrophus aciditrophicus (strain SB).